The primary structure comprises 304 residues: Dihydroorotate dehydrogenase B (NAD(+)), catalytic subunit (304 aa).

FMN-binding positions include Ser21 and 45-46; that span reads KA. Residues Lys45 and 69–73 contribute to the substrate site; that span reads NAIGL. 2 residues coordinate FMN: Asn99 and Asn127. A substrate-binding site is contributed by Asn127. The Nucleophile role is filled by Cys130. Lys165 and Ile191 together coordinate FMN. 192–193 contacts substrate; the sequence is NT. FMN-binding positions include Gly217, 243–244, and 265–266; these read GG and GT.

The protein belongs to the dihydroorotate dehydrogenase family. Type 1 subfamily. As to quaternary structure, heterotetramer of 2 PyrK and 2 PyrD type B subunits. FMN serves as cofactor.

It localises to the cytoplasm. The catalysed reaction is (S)-dihydroorotate + NAD(+) = orotate + NADH + H(+). It functions in the pathway pyrimidine metabolism; UMP biosynthesis via de novo pathway; orotate from (S)-dihydroorotate (NAD(+) route): step 1/1. Catalyzes the conversion of dihydroorotate to orotate with NAD(+) as electron acceptor. The polypeptide is Dihydroorotate dehydrogenase B (NAD(+)), catalytic subunit (pyrD) (Shouchella clausii (strain KSM-K16) (Alkalihalobacillus clausii)).